Consider the following 207-residue polypeptide: Histidine biosynthesis bifunctional protein HisIE (207 aa).

A phosphoribosyl-AMP cyclohydrolase region spans residues methionine 1–phenylalanine 115. The interval leucine 116 to leucine 207 is phosphoribosyl-ATP pyrophosphohydrolase.

The protein in the N-terminal section; belongs to the PRA-CH family. In the C-terminal section; belongs to the PRA-PH family.

The protein localises to the cytoplasm. It carries out the reaction 1-(5-phospho-beta-D-ribosyl)-ATP + H2O = 1-(5-phospho-beta-D-ribosyl)-5'-AMP + diphosphate + H(+). The catalysed reaction is 1-(5-phospho-beta-D-ribosyl)-5'-AMP + H2O = 1-(5-phospho-beta-D-ribosyl)-5-[(5-phospho-beta-D-ribosylamino)methylideneamino]imidazole-4-carboxamide. It participates in amino-acid biosynthesis; L-histidine biosynthesis; L-histidine from 5-phospho-alpha-D-ribose 1-diphosphate: step 2/9. It functions in the pathway amino-acid biosynthesis; L-histidine biosynthesis; L-histidine from 5-phospho-alpha-D-ribose 1-diphosphate: step 3/9. The polypeptide is Histidine biosynthesis bifunctional protein HisIE (hisI) (Buchnera aphidicola subsp. Schizaphis graminum (strain Sg)).